Reading from the N-terminus, the 221-residue chain is PKHD-type hydroxylase PMT_0286 (221 aa).

The Fe2OG dioxygenase domain occupies 80–174 (HIHGVMFSRS…RLVCVGWIQS (95 aa)). Fe cation is bound by residues His98, Asp100, and His155. Residue Arg165 coordinates 2-oxoglutarate.

The cofactor is Fe(2+). It depends on L-ascorbate as a cofactor.

This is PKHD-type hydroxylase PMT_0286 from Prochlorococcus marinus (strain MIT 9313).